The sequence spans 351 residues: MDIMNEKVKKIIEFMDKNSIDAVLIAKNPNVYYISGASPLAGGYILITGESATLYVPELEYEMAKEESNIPVEKFKKMDEFYKALEGIKSLGIESSLPYGFIEELKKKANIKEFKKVDDVIRDMRIIKSEKEIKIIEKACEIADKAVMAAIEEITEGKKEREVAAKVEYLMKMNGAEKPAFDTIIASGYRSALPHGVASDKRIERGDLVVIDLGALYQHYNSDITRTIVVGSPNEKQKEIYEIVLEAQKKAVESAKPGITAKELDSIARNIIAEYGYGEYFNHSLGHGVGLEVHEWPRVSQYDETVLREGMVITIEPGIYIPKIGGVRIEDTILITKNGSKRLTKTERELI.

Positions 212, 223, 287, 316, and 330 each coordinate Co(2+).

It belongs to the peptidase M24B family. Archaeal-type prolidase subfamily. As to quaternary structure, homodimer. Requires Co(2+) as cofactor.

The protein resides in the cytoplasm. It catalyses the reaction Xaa-L-Pro dipeptide + H2O = an L-alpha-amino acid + L-proline. Its function is as follows. Splits dipeptides with a prolyl in the C-terminal position and a nonpolar amino acid at the N-terminal position. In Pyrococcus horikoshii (strain ATCC 700860 / DSM 12428 / JCM 9974 / NBRC 100139 / OT-3), this protein is Xaa-Pro dipeptidase (pepQ).